A 198-amino-acid polypeptide reads, in one-letter code: Large ribosomal subunit protein bL12m (198 aa).

Residues 1–36 (MLPAAARPLWGPCLGLRAAAFRLARRQVPCVCAVRH) constitute a mitochondrion transit peptide. N6-acetyllysine is present on residues lysine 125, lysine 138, lysine 142, and lysine 144. Lysine 150 is modified (N6-acetyllysine; alternate). The residue at position 150 (lysine 150) is an N6-succinyllysine; alternate. A Glycyl lysine isopeptide (Lys-Gly) (interchain with G-Cter in ubiquitin) cross-link involves residue lysine 150. Lysine 162 is subject to N6-succinyllysine. Lysine 163 and lysine 173 each carry N6-acetyllysine. The residue at position 178 (lysine 178) is an N6-acetyllysine; alternate. An N6-succinyllysine; alternate modification is found at lysine 178. Lysine 185 is subject to N6-acetyllysine.

Belongs to the bacterial ribosomal protein bL12 family. Component of the mitochondrial large ribosomal subunit (mt-LSU). Mature mammalian 55S mitochondrial ribosomes consist of a small (28S) and a large (39S) subunit. The 28S small subunit contains a 12S ribosomal RNA (12S mt-rRNA) and 30 different proteins. The 39S large subunit contains a 16S rRNA (16S mt-rRNA), a copy of mitochondrial valine transfer RNA (mt-tRNA(Val)), which plays an integral structural role, and 52 different proteins. bL12m interacts with NOA1. In terms of processing, two mature forms are produced by differential two-step proteolytic cleavage. Cleaved by the mitochondrial processing protease to produce the long mature form and subsequently by the mitochondrial intermediate protease to produce the short mature form. In the presence of CUL3, undergoes 'Lys-63'-linked ubiquitination at Lys-150 which results in proteasomal degradation.

It localises to the mitochondrion matrix. As a component of the mitochondrial large ribosomal subunit, plays a role in mitochondrial translation. When present in mitochondria as a free protein not associated with the ribosome, associates with mitochondrial RNA polymerase POLRMT to activate transcription. Required for POLRMT stability. This chain is Large ribosomal subunit protein bL12m (MRPL12), found in Homo sapiens (Human).